Here is a 186-residue protein sequence, read N- to C-terminus: Tegument protein UL55 (186 aa).

It belongs to the alphaherpesvirinae HHV-1 UL55 family.

It is found in the virion tegument. It localises to the host nucleus matrix. This chain is Tegument protein UL55, found in Human herpesvirus 2 (strain HG52) (HHV-2).